The chain runs to 218 residues: Pyridoxine/pyridoxamine 5'-phosphate oxidase (218 aa).

Residues 14–17 (RREY) and Lys-72 each bind substrate. FMN contacts are provided by residues 67–72 (RIVLLK), 82–83 (YT), Arg-88, Lys-89, and Gln-111. Positions 129, 133, and 137 each coordinate substrate. FMN contacts are provided by residues 146 to 147 (QS) and Trp-191. 197 to 199 (RLH) is a substrate binding site. Arg-201 contributes to the FMN binding site.

It belongs to the pyridoxamine 5'-phosphate oxidase family. Homodimer. It depends on FMN as a cofactor.

It carries out the reaction pyridoxamine 5'-phosphate + O2 + H2O = pyridoxal 5'-phosphate + H2O2 + NH4(+). It catalyses the reaction pyridoxine 5'-phosphate + O2 = pyridoxal 5'-phosphate + H2O2. The protein operates within cofactor metabolism; pyridoxal 5'-phosphate salvage; pyridoxal 5'-phosphate from pyridoxamine 5'-phosphate: step 1/1. It participates in cofactor metabolism; pyridoxal 5'-phosphate salvage; pyridoxal 5'-phosphate from pyridoxine 5'-phosphate: step 1/1. In terms of biological role, catalyzes the oxidation of either pyridoxine 5'-phosphate (PNP) or pyridoxamine 5'-phosphate (PMP) into pyridoxal 5'-phosphate (PLP). The polypeptide is Pyridoxine/pyridoxamine 5'-phosphate oxidase (Escherichia coli O7:K1 (strain IAI39 / ExPEC)).